The sequence spans 336 residues: Tyrosine recombinase XerC (336 aa).

One can recognise a Core-binding (CB) domain in the interval 14-106; that stretch reads VARCRWLEPF…SVKSFYRFLL (93 aa). One can recognise a Tyr recombinase domain in the interval 127–330; the sequence is KVPRFVSEEE…TFSRLKEIYD (204 aa). Catalysis depends on residues Arg183, Lys207, His282, Arg285, and His308. Tyr317 acts as the O-(3'-phospho-DNA)-tyrosine intermediate in catalysis.

This sequence belongs to the 'phage' integrase family. XerC subfamily. As to quaternary structure, forms a cyclic heterotetrameric complex composed of two molecules of XerC and two molecules of XerD.

The protein localises to the cytoplasm. Its function is as follows. Site-specific tyrosine recombinase, which acts by catalyzing the cutting and rejoining of the recombining DNA molecules. The XerC-XerD complex is essential to convert dimers of the bacterial chromosome into monomers to permit their segregation at cell division. It also contributes to the segregational stability of plasmids. In Chlorobaculum parvum (strain DSM 263 / NCIMB 8327) (Chlorobium vibrioforme subsp. thiosulfatophilum), this protein is Tyrosine recombinase XerC.